Consider the following 391-residue polypeptide: MAAVVENVVKLLGEQYYKDAMEQCHNYNARLCAERSVRLPFLDSQTGVAQSNCYIWMEKRHRGPGLASGQLYSYPARRWRKKRRAHPPEDPRLSFPSIKPDTDQTLKKEGLISQDGSSLEALLRTDPLEKRGAPDPRVDDDSLGEFPVSNSRARKRIIEPDDFLDDLDDEDYEEDTPKRRGKGKSKSKGVSSARKKLDASILEDRDKPYACDICGKRYKNRPGLSYHYAHSHLAEEEGEDKEDSRPPTPVSQRSEEQKSKKGPDGLALPNNYCDFCLGDSKINKKTGQPEELVSCSDCGRSGHPSCLQFTPVMMAAVKTYRWQCIECKCCNLCGTSENDDQLLFCDDCDRGYHMYCLTPSMSEPPEGSWSCHLCLDLLKEKASIYQNQNSS.

Position 2 is an N-acetylalanine (alanine 2). Glycyl lysine isopeptide (Lys-Gly) (interchain with G-Cter in SUMO2) cross-links involve residues lysine 10, lysine 99, lysine 107, and lysine 108. Disordered stretches follow at residues 79–147 (WRKK…GEFP) and 165–199 (DDLD…KLDA). Basic and acidic residues-rich tracts occupy residues 100–110 (PDTDQTLKKEG) and 126–140 (DPLE…RVDD). Serine 142 is modified (phosphoserine). A compositionally biased stretch (acidic residues) spans 165–174 (DDLDDEDYEE). Position 172 is a phosphotyrosine (tyrosine 172). Threonine 176 is modified (phosphothreonine). Residues lysine 178 and lysine 196 each participate in a glycyl lysine isopeptide (Lys-Gly) (interchain with G-Cter in SUMO2) cross-link. A Phosphoserine modification is found at serine 200. A C2H2-type zinc finger spans residues 209–232 (YACDICGKRYKNRPGLSYHYAHSH). The tract at residues 233–266 (LAEEEGEDKEDSRPPTPVSQRSEEQKSKKGPDGL) is disordered. At serine 244 the chain carries Phosphoserine. The segment covering 253-263 (RSEEQKSKKGP) has biased composition (basic and acidic residues). 2 PHD-type zinc fingers span residues 270–330 (NNYC…CKCC) and 327–377 (CKCC…CLDL). Serine 280 is subject to Phosphoserine. Lysine 281 is covalently cross-linked (Glycyl lysine isopeptide (Lys-Gly) (interchain with G-Cter in SUMO2)).

This sequence belongs to the requiem/DPF family. Interacts with the nucleosomes, in particular nucleosomes bearing histone H3 crotonylated at 'Lys-14' (H3K14cr) for which DPF2 has high affinity. Also interacts (via PHD-type zinc finger domains) with histone H3 butyrylated at 'Lys-14' (H3K14bu), histone H3 propionylated at 'Lys-14' (H3K14pr), and histone H3 acetylated at 'Lys-14' (H3K14ac). Interacts with histone H3 acetylated at 'Lys-9' (H3K9ac), histone H3 di-methylated at 'Lys-9' (H3K9me2), and histone H3 tri-methylated at 'Lys-9' (H3K9me3). Interacts with histone H4 acetylated at 'Lys-12' (H4K12ac). Interacts with histone H4 acetylated at 'Lys-16' (H4K16ac). Interacts with SWI/SNF complex components. Interacts with SMARCA2, SMARCA4, SMARCB1 and SMARCD1. Interacts with SMARCC1, SMARCC2 and ACTL6A. Interacts with RUNX1. As to expression, in embryo, highest levels are seen in brain, eyes, thymus and olfactory epithelium in nose, whereas several other tissues, including the musculoskeletal system, show moderate expression. In adult, higher expression in testis, medium in thymus and spleen, lower in certain parts of the brain as the hippocampus. No expression in adult heart, lung, liver, duodenum and kidney.

The protein localises to the nucleus. The protein resides in the cytoplasm. Functionally, plays an active role in transcriptional regulation by binding modified histones H3 and H4. Is a negative regulator of myeloid differentiation of hematopoietic progenitor cells. Might also have a role in the development and maturation of lymphoid cells. Involved in the regulation of non-canonical NF-kappa-B pathway. The sequence is that of Zinc finger protein ubi-d4 (Dpf2) from Mus musculus (Mouse).